The chain runs to 20 residues: Unknown protein from 2D-PAGE of needles (20 aa).

The chain is Unknown protein from 2D-PAGE of needles from Pinus pinaster (Maritime pine).